We begin with the raw amino-acid sequence, 266 residues long: uncharacterized protein (266 aa).

It belongs to the chlamydial CPn_0087/CT_309/TC_0583 family.

This is an uncharacterized protein from Chlamydia trachomatis serovar D (strain ATCC VR-885 / DSM 19411 / UW-3/Cx).